The primary structure comprises 377 residues: Alkane 1-monooxygenase 2 (377 aa).

Helical transmembrane passes span 17-37 (GYWI…WSLG), 43-63 (AWPW…DAIV), 87-107 (VLSL…GWIL), and 116-136 (VGQL…GITV). 5 residues coordinate Fe cation: His-138, His-142, His-168, His-172, and His-173. The chain crosses the membrane as a helical span at residues 236–256 (ALFLLGFSLAFGWLGAIFFLG). His-312, His-315, and His-316 together coordinate Fe cation.

This sequence belongs to the fatty acid desaturase type 1 family. AlkB subfamily. Fe(3+) serves as cofactor.

Its subcellular location is the cell inner membrane. It carries out the reaction octane + 2 reduced [rubredoxin] + O2 + 2 H(+) = 2 oxidized [rubredoxin] + octan-1-ol + H2O. It participates in hydrocarbon metabolism; alkane degradation. Catalyzes the hydroxylation of n-alkanes in the presence of a NADH-rubredoxin reductase and rubredoxin. It preferably hydroxylases C12-C20 hydrocarbons. The sequence is that of Alkane 1-monooxygenase 2 (alkB2) from Pseudomonas aeruginosa (strain ATCC 15692 / DSM 22644 / CIP 104116 / JCM 14847 / LMG 12228 / 1C / PRS 101 / PAO1).